Reading from the N-terminus, the 885-residue chain is DNA mismatch repair protein MutS (885 aa).

626–633 (GPNMGGKS) is a binding site for ATP.

The protein belongs to the DNA mismatch repair MutS family.

Functionally, this protein is involved in the repair of mismatches in DNA. It is possible that it carries out the mismatch recognition step. This protein has a weak ATPase activity. This is DNA mismatch repair protein MutS from Burkholderia cenocepacia (strain HI2424).